Here is a 251-residue protein sequence, read N- to C-terminus: 7-cyano-7-deazaguanine synthase (251 aa).

Positions 1-21 are disordered; it reads MSDLPRHSPRRQHAGESAVTA. 35 to 45 provides a ligand contact to ATP; sequence YSGGMDSYTVL. Residues cysteine 212, cysteine 220, cysteine 223, and cysteine 226 each coordinate Zn(2+).

This sequence belongs to the QueC family. Requires Zn(2+) as cofactor.

The catalysed reaction is 7-carboxy-7-deazaguanine + NH4(+) + ATP = 7-cyano-7-deazaguanine + ADP + phosphate + H2O + H(+). It participates in purine metabolism; 7-cyano-7-deazaguanine biosynthesis. Catalyzes the ATP-dependent conversion of 7-carboxy-7-deazaguanine (CDG) to 7-cyano-7-deazaguanine (preQ(0)). This is 7-cyano-7-deazaguanine synthase from Chromohalobacter salexigens (strain ATCC BAA-138 / DSM 3043 / CIP 106854 / NCIMB 13768 / 1H11).